Consider the following 235-residue polypeptide: Ubiquinone biosynthesis O-methyltransferase (235 aa).

R36, G56, D77, and M122 together coordinate S-adenosyl-L-methionine.

It belongs to the methyltransferase superfamily. UbiG/COQ3 family.

The enzyme catalyses a 3-demethylubiquinol + S-adenosyl-L-methionine = a ubiquinol + S-adenosyl-L-homocysteine + H(+). It catalyses the reaction a 3-(all-trans-polyprenyl)benzene-1,2-diol + S-adenosyl-L-methionine = a 2-methoxy-6-(all-trans-polyprenyl)phenol + S-adenosyl-L-homocysteine + H(+). It participates in cofactor biosynthesis; ubiquinone biosynthesis. O-methyltransferase that catalyzes the 2 O-methylation steps in the ubiquinone biosynthetic pathway. In Leptothrix cholodnii (strain ATCC 51168 / LMG 8142 / SP-6) (Leptothrix discophora (strain SP-6)), this protein is Ubiquinone biosynthesis O-methyltransferase.